Here is a 172-residue protein sequence, read N- to C-terminus: Large ribosomal subunit protein eL20A (172 aa).

Residue serine 32 is modified to Phosphoserine. Residues lysine 125, lysine 131, and lysine 149 each participate in a glycyl lysine isopeptide (Lys-Gly) (interchain with G-Cter in ubiquitin) cross-link.

Belongs to the eukaryotic ribosomal protein eL20 family. As to quaternary structure, component of the large ribosomal subunit (LSU). Mature yeast ribosomes consist of a small (40S) and a large (60S) subunit. The 40S small subunit contains 1 molecule of ribosomal RNA (18S rRNA) and 33 different proteins (encoded by 57 genes). The large 60S subunit contains 3 rRNA molecules (25S, 5.8S and 5S rRNA) and 46 different proteins (encoded by 81 genes). eL20 forms multiple interactions with RNA and proteins in the central protuberance, connecting components of core functional centers that are located far apart.

It is found in the cytoplasm. In terms of biological role, component of the ribosome, a large ribonucleoprotein complex responsible for the synthesis of proteins in the cell. The small ribosomal subunit (SSU) binds messenger RNAs (mRNAs) and translates the encoded message by selecting cognate aminoacyl-transfer RNA (tRNA) molecules. The large subunit (LSU) contains the ribosomal catalytic site termed the peptidyl transferase center (PTC), which catalyzes the formation of peptide bonds, thereby polymerizing the amino acids delivered by tRNAs into a polypeptide chain. The nascent polypeptides leave the ribosome through a tunnel in the LSU and interact with protein factors that function in enzymatic processing, targeting, and the membrane insertion of nascent chains at the exit of the ribosomal tunnel. This is Large ribosomal subunit protein eL20A from Saccharomyces cerevisiae (strain ATCC 204508 / S288c) (Baker's yeast).